A 1122-amino-acid polypeptide reads, in one-letter code: MNSPNESDGMSGREPSLEILPRTSLHSIPVTVEVKPVLPRAMPSSMGGGGGGSPSPVELRGALVGSVDPTLREQLLQQELLALKQQQQLQKQLLFAEFQKQHDHLTRQHEVQLQKHLKQQQEMLAAKQQQEMLAAKRQQELEQQRQREQQRQEELEKQRLEQQLLILRNKEKSKESAIASTEVKLRLQEFLLSKSKEPTPGGLNHSLPQHPKCWGAHHASLDQSSPPQSGPPGTPPSYKLPLPGPYDSRDDFPLRKTASEPNLKVRSRLKQKVAERRSSPLLRRKDGTVISTFKKRAVEITGAGPGASSVCNSAPGSGPSSPNSSHSTIAENGFTGSVPNIPTEMLPQHRALPLDSSSNQFSLYTSPSLPNISLGLQATVTVTNSHLTASPKLSTQQEAERQALQSLRQGGTLTGKFMSTSSIPGCLLGVALEGDGSPHGHASLLQHVLLLEQARQQSTLIAVPLHGQSPLVTGERVATSMRTVGKLPRHRPLSRTQSSPLPQSPQALQQLVMQQQHQQFLEKQKQQQLQLGKILTKTGELPRQPTTHPEETEEELTEQQEALLGEGALTMPREGSTESESTQEDLEEEDEEEDGEEEEDCIQVKDEEGESGAEEGPDLEEPGAGYKKLFSDAQPLQPLQVYQAPLSLATVPHQALGRTQSSPAAPGGMKSPPDQPVKHLFTTGVVYDTFMLKHQCMCGNTHVHPEHAGRIQSTWSRLQETGLLSKCERIRGRKATLDEIQTVHSEYHTLLYGTSPLNRQKVDSKKLLGPISQKMYAVLPCGGIGVDSDTVWNEMHSSSAVRMAVGCLLELAFKVAAGELKNGFAIIRPPGHHAEESTAMGFCFFNSVAITAKLLQQKLNVGKVLIVDWDIHHGNGTQQAFYNDPSVLYISLHRYDNGNFFPGSGAPEEVGGGPGVGYNVNVAWIGGVDPPIGDVEYLTAFRTVVMPIAHEFSPDVVLVSAGFDAVEGHLSPLGGYSVTARCFGHLTRQLMTLAGGRVVLALEGGHDLTAICDASEACVSALLSVELQPLDEAVLQQKPNINAVATLEKVIEIQSKHWSCVQKFAAGLGRSLREAQAGETEEAETVSAMALLSVGAEQAQAAAAREHSPRPAEEPMEQEPAL.

The interval 1–22 (MNSPNESDGMSGREPSLEILPR) is disordered. A Glycyl lysine isopeptide (Lys-Gly) (interchain with G-Cter in SUMO2) cross-link involves residue Lys35. The interval 196-281 (KEPTPGGLNH…KVAERRSSPL (86 aa)) is disordered. The segment covering 247-258 (DSRDDFPLRKTA) has biased composition (basic and acidic residues). Phosphoserine; by AMPK, CaMK1, SIK1 and PKD/PRKD1 is present on Ser259. Over residues 272–281 (KVAERRSSPL) the composition is skewed to basic and acidic residues. Thr292 bears the Phosphothreonine; by PKC mark. 2 disordered regions span residues 302 to 343 (GAGP…NIPT) and 481 to 504 (MRTV…LPQS). Over residues 312-327 (NSAPGSGPSSPNSSHS) the composition is skewed to low complexity. Residues 328 to 340 (TIAENGFTGSVPN) are compositionally biased toward polar residues. Residues 494–504 (SRTQSSPLPQS) show a composition bias toward low complexity. Position 498 is a phosphoserine; by AMPK, CaMK1, SIK1 and PKD/PRKD1 (Ser498). N6-acetyllysine is present on Lys533. The tract at residues 536-625 (TKTGELPRQP…GPDLEEPGAG (90 aa)) is disordered. The span at 581–621 (STQEDLEEEDEEEDGEEEEDCIQVKDEEGESGAEEGPDLEE) shows a compositional bias: acidic residues. A phosphoserine mark is found at Ser611 and Ser661. A histone deacetylase region spans residues 684–1028 (GVVYDTFMLK…VSALLSVELQ (345 aa)). 4 residues coordinate Zn(2+): Cys696, Cys698, His704, and Cys781. Residue His833 is part of the active site. Positions 1081–1122 (EEAETVSAMALLSVGAEQAQAAAAREHSPRPAEEPMEQEPAL) match the Nuclear export signal motif. The disordered stretch occupies residues 1097-1122 (EQAQAAAAREHSPRPAEEPMEQEPAL). Over residues 1104-1113 (AREHSPRPAE) the composition is skewed to basic and acidic residues. Ser1108 is modified (phosphoserine).

Belongs to the histone deacetylase family. HD type 2 subfamily. As to quaternary structure, interacts with AHRR, BAHD1, BCOR, HDAC7, HDAC9, CTBP1, MEF2C, NCOR2, NRIP1, PHB2 and a 14-3-3 chaperone protein. Interacts with BCL6, DDIT3/CHOP, GRK5, KDM5B and MYOCD. Interacts with EP300 in the presence of TFAP2C. Interacts with ANKRA2. Interacts with CUL7 (as part of the 3M complex); negatively regulated by ANKRA2. Interacts with ZBTB7B; the interaction allows the recruitment of HDAC4 on CD8 loci for deacetylation and possible inhibition of CD8 genes expression. Interacts with RARA. Phosphorylated by AMPK, CaMK1, SIK1 and PRKD1 at Ser-259 and Ser-498. The phosphorylation is required for the export to the cytoplasm and inhibition. Phosphorylated by the PKC kinases PKN1 and PKN2, impairing nuclear import. Phosphorylated by GRK5, leading to nuclear export of HDAC5 and allowing MEF2-mediated transcription. Post-translationally, ubiquitinated. Polyubiquitination however does not lead to its degradation.

It localises to the nucleus. The protein localises to the cytoplasm. The catalysed reaction is N(6)-acetyl-L-lysyl-[histone] + H2O = L-lysyl-[histone] + acetate. Functionally, responsible for the deacetylation of lysine residues on the N-terminal part of the core histones (H2A, H2B, H3 and H4). Histone deacetylation gives a tag for epigenetic repression and plays an important role in transcriptional regulation, cell cycle progression and developmental events. Histone deacetylases act via the formation of large multiprotein complexes. Involved in muscle maturation by repressing transcription of myocyte enhancer MEF2C. During muscle differentiation, it shuttles into the cytoplasm, allowing the expression of myocyte enhancer factors. Serves as a corepressor of RARA and causes its deacetylation. In association with RARA, plays a role in the repression of microRNA-10a and thereby in the inflammatory response. This Pongo abelii (Sumatran orangutan) protein is Histone deacetylase 5 (HDAC5).